Consider the following 1024-residue polypeptide: Error-prone DNA polymerase (1024 aa).

This sequence belongs to the DNA polymerase type-C family. DnaE2 subfamily.

It is found in the cytoplasm. The enzyme catalyses DNA(n) + a 2'-deoxyribonucleoside 5'-triphosphate = DNA(n+1) + diphosphate. In terms of biological role, DNA polymerase involved in damage-induced mutagenesis and translesion synthesis (TLS). It is not the major replicative DNA polymerase. This Vibrio vulnificus (strain CMCP6) protein is Error-prone DNA polymerase.